Consider the following 95-residue polypeptide: Large ribosomal subunit protein bL27 (95 aa).

Positions 1-8 are excised as a propeptide; sequence MEMNLQFF. The interval 1–34 is disordered; sequence MEMNLQFFSHHKGGGSTSNGRDSAGRRLGTKRAD.

Belongs to the bacterial ribosomal protein bL27 family. Post-translationally, the N-terminus is cleaved by ribosomal processing cysteine protease Prp.

The protein is Large ribosomal subunit protein bL27 of Pediococcus pentosaceus (strain ATCC 25745 / CCUG 21536 / LMG 10740 / 183-1w).